We begin with the raw amino-acid sequence, 464 residues long: L-cysteine:1D-myo-inositol 2-amino-2-deoxy-alpha-D-glucopyranoside ligase (464 aa).

Cysteine 67 contributes to the Zn(2+) binding site. L-cysteinyl-5'-AMP is bound by residues 67-70 (CGIT), threonine 82, and 105-107 (NVT). The 'HIGH' region motif lies at 69–79 (ITPYDATHLGH). Residues 207-212 (ERGGDP) carry the 'ERGGDP' region motif. L-cysteinyl-5'-AMP is bound at residue tryptophan 247. Residue cysteine 251 coordinates Zn(2+). 269 to 271 (GTD) is a binding site for L-cysteinyl-5'-AMP. Histidine 276 contributes to the Zn(2+) binding site. Valine 303 provides a ligand contact to L-cysteinyl-5'-AMP. The 'KMSKS' region motif lies at 309–313 (KMSKS). Residues 410-435 (AGGSAGAGPDPTHQGGPVRGSGGDVP) form a disordered region.

Belongs to the class-I aminoacyl-tRNA synthetase family. MshC subfamily. As to quaternary structure, monomer. The cofactor is Zn(2+).

It carries out the reaction 1D-myo-inositol 2-amino-2-deoxy-alpha-D-glucopyranoside + L-cysteine + ATP = 1D-myo-inositol 2-(L-cysteinylamino)-2-deoxy-alpha-D-glucopyranoside + AMP + diphosphate + H(+). In terms of biological role, catalyzes the ATP-dependent condensation of GlcN-Ins and L-cysteine to form L-Cys-GlcN-Ins. In Frankia casuarinae (strain DSM 45818 / CECT 9043 / HFP020203 / CcI3), this protein is L-cysteine:1D-myo-inositol 2-amino-2-deoxy-alpha-D-glucopyranoside ligase.